Here is a 411-residue protein sequence, read N- to C-terminus: Serine/threonine transporter SstT (411 aa).

The next 9 membrane-spanning stretches (helical) occupy residues 14-34 (GSLV…ASVA), 43-63 (FLGG…VFIL), 82-102 (IIML…VMSF), 141-161 (ALMS…GFAL), 192-212 (IGIF…ALAG), 218-238 (AVLL…IVFF), 290-310 (IPLG…VLTL), 330-350 (VVAA…LLLI), and 357-377 (FGIP…IGVI).

Belongs to the dicarboxylate/amino acid:cation symporter (DAACS) (TC 2.A.23) family.

It localises to the cell inner membrane. It catalyses the reaction L-serine(in) + Na(+)(in) = L-serine(out) + Na(+)(out). The enzyme catalyses L-threonine(in) + Na(+)(in) = L-threonine(out) + Na(+)(out). Its function is as follows. Involved in the import of serine and threonine into the cell, with the concomitant import of sodium (symport system). In Photobacterium profundum (strain SS9), this protein is Serine/threonine transporter SstT.